Reading from the N-terminus, the 561-residue chain is Arginine--tRNA ligase (561 aa).

The 'HIGH' region motif lies at 128 to 138 (ANPTGPLHVGH).

This sequence belongs to the class-I aminoacyl-tRNA synthetase family. Monomer.

It is found in the cytoplasm. It catalyses the reaction tRNA(Arg) + L-arginine + ATP = L-arginyl-tRNA(Arg) + AMP + diphosphate. This is Arginine--tRNA ligase from Marinobacter nauticus (strain ATCC 700491 / DSM 11845 / VT8) (Marinobacter aquaeolei).